We begin with the raw amino-acid sequence, 1216 residues long: Probable phospholipid-transporting ATPase 4 (1216 aa).

Residues 1–74 lie on the Cytoplasmic side of the membrane; it reads MARGRIRSKL…TTRYNLITFF (74 aa). Residues 75–96 traverse the membrane as a helical segment; the sequence is PKCLYEQFHRAANFYFLVAAIL. Topologically, residues 97 to 100 are extracellular; that stretch reads SVFP. Residues 101-123 form a helical membrane-spanning segment; it reads LSPFNKWSMIAPLVFVVGLSMLK. The Cytoplasmic segment spans residues 124–305; the sequence is EALEDWSRFM…SRIEKTMDYI (182 aa). A helical transmembrane segment spans residues 306-327; the sequence is IYTLLVLLILISCISSSGFAWE. The Extracellular segment spans residues 328-359; the sequence is TKFHMPKWWYLRPEEPENLTNPSNPVYAGFVH. Residues 360 to 377 traverse the membrane as a helical segment; sequence LITALLLYGYLIPISLYV. Residues 378 to 922 lie on the Cytoplasmic side of the membrane; the sequence is SIEVVKVLQA…HGHWCYKRIA (545 aa). Residue Asp-425 is the 4-aspartylphosphate intermediate of the active site. Residue Lys-605 forms a Glycyl lysine isopeptide (Lys-Gly) (interchain with G-Cter in ubiquitin) linkage. Residues Asp-867 and Asp-871 each contribute to the Mg(2+) site. A helical transmembrane segment spans residues 923 to 942; that stretch reads QMICYFFYKNIAFGLTLFYF. Over 943–956 the chain is Extracellular; that stretch reads EAFTGFSGQSVYND. Residues 957 to 976 form a helical membrane-spanning segment; sequence YYLLLFNVVLTSLPVIALGV. The Cytoplasmic portion of the chain corresponds to 977 to 1006; the sequence is FEQDVSSEICLQFPALYQQGKKNLFFDWYR. A helical membrane pass occupies residues 1007–1029; sequence ILGWMGNGVYSSLVIFFLNIGII. Residues 1030-1042 lie on the Extracellular side of the membrane; the sequence is YEQAFRVSGQTAD. A helical transmembrane segment spans residues 1043–1065; that stretch reads MDAVGTTMFTCIIWAVNVQIALT. The Cytoplasmic portion of the chain corresponds to 1066–1071; sequence VSHFTW. A helical transmembrane segment spans residues 1072–1092; the sequence is IQHVLIWGSIGLWYLFVALYG. The Extracellular portion of the chain corresponds to 1093–1109; sequence MMPPSLSGNIYRILVEI. The chain crosses the membrane as a helical span at residues 1110 to 1134; sequence LAPAPIYWIATFLVTVTTVLPYFAH. Over 1135 to 1216 the chain is Cytoplasmic; the sequence is ISFQRFLHPL…TQDTMSPRSV (82 aa). The interval 1195-1216 is disordered; sequence LNKKQSNMSQFSTQDTMSPRSV. A compositionally biased stretch (polar residues) spans 1198 to 1216; sequence KQSNMSQFSTQDTMSPRSV.

The protein belongs to the cation transport ATPase (P-type) (TC 3.A.3) family. Type IV subfamily.

It localises to the membrane. The catalysed reaction is ATP + H2O + phospholipidSide 1 = ADP + phosphate + phospholipidSide 2.. Functionally, involved in transport of phospholipids. This is Probable phospholipid-transporting ATPase 4 from Arabidopsis thaliana (Mouse-ear cress).